The primary structure comprises 542 residues: Sterile alpha motif domain-containing protein 11 (542 aa).

Positions 268–364 are disordered; it reads LLALPPQGPP…GRGLLSGSTL (97 aa). A compositionally biased stretch (pro residues) spans 273–285; it reads PQGPPGPGPPIPP. Phosphothreonine is present on threonine 342. The 66-residue stretch at 404 to 469 folds into the SAM domain; that stretch reads WTVDDVCNFV…AQVAKRLGRV (66 aa). The tract at residues 486–542 is disordered; the sequence is LQAPELSPGHQPLSPATTTSPYEGTHLPTGQASPKQENGSGTIALLSGAPDPSQLLQ. Phosphoserine is present on serine 499. Polar residues predominate over residues 499-526; the sequence is SPATTTSPYEGTHLPTGQASPKQENGSG.

In terms of assembly, self-associates. Component of a Polycomb group (PcG) multiprotein PRC1-like complex. Interacts with SAMD7 and PHC2. Expressed in the outer nuclear layer of rod photoreceptors in the retina (at protein level). Predominantly expressed in retinal photoreceptors and pineal gland.

The protein resides in the nucleus. Functionally, component of a Polycomb group (PcG) multiprotein PRC1-like complex, essential for establishing rod photoreceptor cell identity and function by silencing nonrod gene expression in developing rod photoreceptor cells. The sequence is that of Sterile alpha motif domain-containing protein 11 (Samd11) from Mus musculus (Mouse).